We begin with the raw amino-acid sequence, 291 residues long: 4-hydroxy-tetrahydrodipicolinate synthase (291 aa).

T45 is a pyruvate binding site. Y133 functions as the Proton donor/acceptor in the catalytic mechanism. Residue K161 is the Schiff-base intermediate with substrate of the active site. I203 is a binding site for pyruvate.

Belongs to the DapA family. In terms of assembly, homotetramer; dimer of dimers.

The protein localises to the cytoplasm. The catalysed reaction is L-aspartate 4-semialdehyde + pyruvate = (2S,4S)-4-hydroxy-2,3,4,5-tetrahydrodipicolinate + H2O + H(+). Its pathway is amino-acid biosynthesis; L-lysine biosynthesis via DAP pathway; (S)-tetrahydrodipicolinate from L-aspartate: step 3/4. In terms of biological role, catalyzes the condensation of (S)-aspartate-beta-semialdehyde [(S)-ASA] and pyruvate to 4-hydroxy-tetrahydrodipicolinate (HTPA). The protein is 4-hydroxy-tetrahydrodipicolinate synthase of Neisseria gonorrhoeae (strain ATCC 700825 / FA 1090).